The primary structure comprises 1464 residues: DNA polymerase III PolC-type (1464 aa).

The Exonuclease domain maps to 426 to 582; it reads YVVFDVETTG…YDAEATGRLL (157 aa).

The protein belongs to the DNA polymerase type-C family. PolC subfamily.

Its subcellular location is the cytoplasm. The enzyme catalyses DNA(n) + a 2'-deoxyribonucleoside 5'-triphosphate = DNA(n+1) + diphosphate. Required for replicative DNA synthesis. This DNA polymerase also exhibits 3' to 5' exonuclease activity. In Streptococcus thermophilus (strain ATCC BAA-250 / LMG 18311), this protein is DNA polymerase III PolC-type.